A 311-amino-acid chain; its full sequence is MGRRPKKRGRDIHGVFLLDKPPGMSSNDIMQKVKRLFQANKAGHTGALDPLATGMLPICLGEATKFSQFLLDADKRYLVTAKLGERTDTSDAEGQLVQTRAVNVNLTEILTALPHFRGDLMQVPTMFSALKHQGKPLYEYARAGVTVQRQARPITIFELKFIDYNAPFLTLEVHCSKGTYIRTLIDDLGEHLGCGAHVVMLRRTAVSDYPAEKMLTWEALQQLAESADLSRLDALLLPTDSAVSKLPPLVLNEQQTKAVGFGQRIRFNNEENIYGQVRLFSAENLFLGVAEINKDNVIRPTRMVNRNNGTE.

D49 acts as the Nucleophile in catalysis.

This sequence belongs to the pseudouridine synthase TruB family. Type 1 subfamily.

It catalyses the reaction uridine(55) in tRNA = pseudouridine(55) in tRNA. Its function is as follows. Responsible for synthesis of pseudouridine from uracil-55 in the psi GC loop of transfer RNAs. In Actinobacillus succinogenes (strain ATCC 55618 / DSM 22257 / CCUG 43843 / 130Z), this protein is tRNA pseudouridine synthase B.